The following is a 241-amino-acid chain: Venom nerve growth factor (241 aa).

The N-terminal stretch at 1 to 18 is a signal peptide; that stretch reads MSMLCYTLIIAFLIGIWA. Positions 19–122 are excised as a propeptide; it reads APKSEDNVPL…SLNRNIRAKR (104 aa). Disulfide bonds link Cys-136–Cys-201, Cys-179–Cys-229, and Cys-189–Cys-231. Residue Asn-145 is glycosylated (N-linked (GlcNAc...) asparagine).

This sequence belongs to the NGF-beta family. As to quaternary structure, homodimer; non-covalently linked. As to expression, expressed by the venom gland.

The protein resides in the secreted. In terms of biological role, nerve growth factor is important for the development and maintenance of the sympathetic and sensory nervous systems. It stimulates division and differentiation of sympathetic and embryonic sensory neurons as well as basal forebrain cholinergic neurons in the brain. Its relevance in the snake venom is not clear. However, it has been shown to inhibit metalloproteinase-dependent proteolysis of platelet glycoprotein Ib alpha, suggesting a metalloproteinase inhibition to prevent metalloprotease autodigestion and/or protection against prey proteases. Binds a lipid between the two protein chains in the homodimer. The lipid-bound form promotes histamine relase from mouse mast cells, contrary to the lipid-free form. The protein is Venom nerve growth factor of Crotalus durissus terrificus (South American rattlesnake).